A 201-amino-acid chain; its full sequence is Holliday junction branch migration complex subunit RuvA (201 aa).

The segment at Met1 to Met63 is domain I. Residues Ser64–Leu142 are domain II. The segment at Asn143–Ser153 is flexible linker. Residues Ser153–Ser201 are domain III.

This sequence belongs to the RuvA family. As to quaternary structure, homotetramer. Forms an RuvA(8)-RuvB(12)-Holliday junction (HJ) complex. HJ DNA is sandwiched between 2 RuvA tetramers; dsDNA enters through RuvA and exits via RuvB. An RuvB hexamer assembles on each DNA strand where it exits the tetramer. Each RuvB hexamer is contacted by two RuvA subunits (via domain III) on 2 adjacent RuvB subunits; this complex drives branch migration. In the full resolvosome a probable DNA-RuvA(4)-RuvB(12)-RuvC(2) complex forms which resolves the HJ.

It is found in the cytoplasm. The RuvA-RuvB-RuvC complex processes Holliday junction (HJ) DNA during genetic recombination and DNA repair, while the RuvA-RuvB complex plays an important role in the rescue of blocked DNA replication forks via replication fork reversal (RFR). RuvA specifically binds to HJ cruciform DNA, conferring on it an open structure. The RuvB hexamer acts as an ATP-dependent pump, pulling dsDNA into and through the RuvAB complex. HJ branch migration allows RuvC to scan DNA until it finds its consensus sequence, where it cleaves and resolves the cruciform DNA. The protein is Holliday junction branch migration complex subunit RuvA of Staphylococcus carnosus (strain TM300).